The chain runs to 324 residues: Polycomb complex protein BMI-1 (324 aa).

The RING-type zinc finger occupies 18-57 (CVLCGGYFIDATTIIECLHSFCKTCIVRYLETSKYCPICD). Residues 81-95 (KLVPGLFKNEMKRRR) carry the Nuclear localization signal motif. An interaction with PHC2 region spans residues 160 to 180 (RYLRCPAAMTVMHLRKFLRSK). Positions 162–226 (LRCPAAMTVM…GPLPLKYRVR (65 aa)) are interaction with E4F1. The disordered stretch occupies residues 232 to 324 (MKMSHQRDGL…LNGSSATSSG (93 aa)). Over residues 264 to 276 (PSTSSCLPSPSTP) the composition is skewed to low complexity. The span at 277–307 (VQSPHPQFPHISSTMNGTSNSPSANHQSSFA) shows a compositional bias: polar residues. The segment covering 313 to 324 (SSLNGSSATSSG) has biased composition (low complexity).

As to quaternary structure, component of a PRC1-like complex. Identified in a PRC1-like HPRC-H complex with CBX2, CBX4, CBX8, PHC1, PHC2, PHC3, RING1 and RNF2. Interacts with RNF2/RING2. Interacts with RING1. Part of a complex that contains RNF2, UB2D3 and BMI1, where RNF2 and BMI1 form a tight heterodimer, and UB2D3 interacts only with RNF2. The complex composed of RNF2, UB2D3 and BMI1 binds nucleosomes, and has activity only with nucleosomal histone H2A. Interacts with CBX7 and CBX8. Interacts with SPOP. Part of a complex consisting of BMI1, CUL3 and SPOP. Interacts with E4F1. Interacts with PHC2. Interacts with zinc finger protein ZNF277. May be part of a complex including at least ZNF277, BMI1 and RNF2/RING2. Post-translationally, may be polyubiquitinated; which does not lead to proteasomal degradation. Monoubiquitinated. As to expression, detected in most organs with high expression levels in thymus, heart, brain and testis.

Its subcellular location is the nucleus. The protein resides in the cytoplasm. Component of a Polycomb group (PcG) multiprotein PRC1-like complex, a complex class required to maintain the transcriptionally repressive state of many genes, including Hox genes, throughout development. PcG PRC1 complex acts via chromatin remodeling and modification of histones; it mediates monoubiquitination of histone H2A 'Lys-119', rendering chromatin heritably changed in its expressibility. The complex composed of RNF2, UB2D3 and BMI1 binds nucleosomes, and has activity only with nucleosomal histone H2A. In the PRC1-like complex, regulates the E3 ubiquitin-protein ligase activity of RNF2/RING2. This Mus musculus (Mouse) protein is Polycomb complex protein BMI-1 (Bmi1).